The following is a 347-amino-acid chain: Quinolinate synthase (347 aa).

Residues histidine 47 and serine 68 each coordinate iminosuccinate. A [4Fe-4S] cluster-binding site is contributed by cysteine 113. Iminosuccinate contacts are provided by residues 139 to 141 and serine 156; that span reads YAN. [4Fe-4S] cluster is bound at residue cysteine 200. Iminosuccinate is bound by residues 226 to 228 and threonine 243; that span reads HPE. [4Fe-4S] cluster is bound at residue cysteine 297.

This sequence belongs to the quinolinate synthase family. Type 1 subfamily. [4Fe-4S] cluster is required as a cofactor.

The protein resides in the cytoplasm. The enzyme catalyses iminosuccinate + dihydroxyacetone phosphate = quinolinate + phosphate + 2 H2O + H(+). It participates in cofactor biosynthesis; NAD(+) biosynthesis; quinolinate from iminoaspartate: step 1/1. Catalyzes the condensation of iminoaspartate with dihydroxyacetone phosphate to form quinolinate. In Salmonella choleraesuis (strain SC-B67), this protein is Quinolinate synthase.